Here is a 61-residue protein sequence, read N- to C-terminus: Small ribosomal subunit protein uS14 (61 aa).

4 residues coordinate Zn(2+): cysteine 24, cysteine 27, cysteine 40, and cysteine 43.

Belongs to the universal ribosomal protein uS14 family. Zinc-binding uS14 subfamily. In terms of assembly, part of the 30S ribosomal subunit. Contacts proteins S3 and S10. Requires Zn(2+) as cofactor.

Its function is as follows. Binds 16S rRNA, required for the assembly of 30S particles and may also be responsible for determining the conformation of the 16S rRNA at the A site. This Alkaliphilus metalliredigens (strain QYMF) protein is Small ribosomal subunit protein uS14.